Reading from the N-terminus, the 95-residue chain is Aspartyl/glutamyl-tRNA(Asn/Gln) amidotransferase subunit C (95 aa).

Belongs to the GatC family. In terms of assembly, heterotrimer of A, B and C subunits.

It catalyses the reaction L-glutamyl-tRNA(Gln) + L-glutamine + ATP + H2O = L-glutaminyl-tRNA(Gln) + L-glutamate + ADP + phosphate + H(+). The enzyme catalyses L-aspartyl-tRNA(Asn) + L-glutamine + ATP + H2O = L-asparaginyl-tRNA(Asn) + L-glutamate + ADP + phosphate + 2 H(+). Functionally, allows the formation of correctly charged Asn-tRNA(Asn) or Gln-tRNA(Gln) through the transamidation of misacylated Asp-tRNA(Asn) or Glu-tRNA(Gln) in organisms which lack either or both of asparaginyl-tRNA or glutaminyl-tRNA synthetases. The reaction takes place in the presence of glutamine and ATP through an activated phospho-Asp-tRNA(Asn) or phospho-Glu-tRNA(Gln). In Pseudomonas fluorescens (strain SBW25), this protein is Aspartyl/glutamyl-tRNA(Asn/Gln) amidotransferase subunit C.